The chain runs to 349 residues: Hepatic sodium/bile acid cotransporter (349 aa).

The Extracellular segment spans residues 1–22; it reads MEAHNASAPFNFTLPPNFGKRP. 2 N-linked (GlcNAc...) asparagine glycosylation sites follow: asparagine 5 and asparagine 11. The helical transmembrane segment at 23 to 44 threads the bilayer; it reads TDLALSVILVFMLFFIMLSLGC. The Cytoplasmic segment spans residues 45–47; the sequence is TME. Residues 48 to 83 traverse the membrane as a helical segment; sequence FSKIKAHLWKPKGLAIALVAQYGIMPLTAFVLGKVF. Residues 84–86 lie on the Extracellular side of the membrane; it reads RLK. Residues 87-112 form a discontinuously helical membrane-spanning segment; the sequence is NIEALAILVCGCSPGGNLSNVFSLAM. Topologically, residues 113–115 are cytoplasmic; the sequence is KGD. A helical transmembrane segment spans residues 116-142; that stretch reads MNLSIVMTTCSTFCALGMMPLLLYIYS. At 143 to 156 the chain is on the extracellular side; it reads RGIYDGDLKDKVPY. Residues 157 to 179 form a helical membrane-spanning segment; that stretch reads KGIVISLVLVLIPCTIGIVLKSK. Residues 180–183 are Cytoplasmic-facing; sequence RPQY. A helical transmembrane segment spans residues 184 to 217; that stretch reads MRYVIKGGMIIILLCSVAVTVLSAINVGKSIMFA. The Extracellular segment spans residues 218-219; sequence MT. Residues 220–243 form a helical membrane-spanning segment; sequence PLLIATSSLMPFIGFLLGYVLSAL. At 244-247 the chain is on the cytoplasmic side; that stretch reads FCLN. Residues 248–273 traverse the membrane as a discontinuously helical segment; it reads GRCRRTVSMETGCQNVQLCSTILNVA. The Extracellular segment spans residues 274-280; it reads FPPEVIG. Residues 281-311 form a helical membrane-spanning segment; sequence PLFFFPLLYMIFQLGEGLLLIAIFWCYEKFK. Topologically, residues 312 to 349 are cytoplasmic; it reads TPKDKTKMIYTAATTEETIPGALGNGTYKGEDCSPCTA.

Belongs to the bile acid:sodium symporter (BASS) (TC 2.A.28) family. In terms of assembly, (Microbial infection) Interacts with the myristoylated pre-S1 domain of hepatitis B virus large envelope protein; myristoylation is essential for this interaction. As to expression, expressed in liver. Expressed in placental trophoblasts.

It is found in the cell membrane. It carries out the reaction taurocholate(out) + 2 Na(+)(out) = taurocholate(in) + 2 Na(+)(in). The catalysed reaction is cholate(out) + 2 Na(+)(out) = cholate(in) + 2 Na(+)(in). The enzyme catalyses estrone 3-sulfate(out) + 2 Na(+)(out) = estrone 3-sulfate(in) + 2 Na(+)(in). It catalyses the reaction taurochenodeoxycholate(out) + 2 Na(+)(out) = taurochenodeoxycholate(in) + 2 Na(+)(in). It carries out the reaction tauroursodeoxycholate(out) + 2 Na(+)(out) = tauroursodeoxycholate(in) + 2 Na(+)(in). The catalysed reaction is glycocholate(out) + 2 Na(+)(out) = glycocholate(in) + 2 Na(+)(in). The enzyme catalyses tauronorcholate(out) + 2 Na(+)(out) = tauronorcholate(in) + 2 Na(+)(in). It catalyses the reaction taurodeoxycholate(out) + 2 Na(+)(out) = taurodeoxycholate(in) + 2 Na(+)(in). It carries out the reaction tauroallocholate(out) + 2 Na(+)(out) = tauroallocholate(in) + 2 Na(+)(in). The catalysed reaction is taurohyodeoxycholate(out) + 2 Na(+)(out) = taurohyodeoxycholate(in) + 2 Na(+)(in). The enzyme catalyses taurohyocholate(out) + 2 Na(+)(out) = taurohyocholate(in) + 2 Na(+)(in). It catalyses the reaction tauro-beta-muricholate(out) + 2 Na(+)(out) = tauro-beta-muricholate(in) + 2 Na(+)(in). With respect to regulation, the transport of bile acids is sodium-dependent. Its function is as follows. As a major transporter of conjugated bile salts from plasma into the hepatocyte, it plays a key role in the enterohepatic circulation of bile salts necessary for the solubilization and absorption of dietary fat and fat-soluble vitamins. It is strictly dependent on the extracellular presence of sodium. It exhibits broad substrate specificity and transports various bile acids, such as taurocholate, cholate, as well as non-bile acid organic compounds, such as estrone sulfate. Works collaboratively with the ileal transporter (NTCP2), the organic solute transporter (OST), and the bile salt export pump (BSEP), to ensure efficacious biological recycling of bile acids during enterohepatic circulation. Functionally, (Microbial infection) Acts as an entry receptor for hepatitis B virus (HBV). The recognition for human SLC10A1/NTCP is highly specific. This Homo sapiens (Human) protein is Hepatic sodium/bile acid cotransporter (SLC10A1).